The sequence spans 476 residues: Glycogen synthase (476 aa).

K15 contacts ADP-alpha-D-glucose.

Belongs to the glycosyltransferase 1 family. Bacterial/plant glycogen synthase subfamily.

The catalysed reaction is [(1-&gt;4)-alpha-D-glucosyl](n) + ADP-alpha-D-glucose = [(1-&gt;4)-alpha-D-glucosyl](n+1) + ADP + H(+). The protein operates within glycan biosynthesis; glycogen biosynthesis. Its function is as follows. Synthesizes alpha-1,4-glucan chains using ADP-glucose. In Streptococcus equi subsp. equi (strain 4047), this protein is Glycogen synthase.